The sequence spans 466 residues: tRNA-2-methylthio-N(6)-dimethylallyladenosine synthase (466 aa).

One can recognise an MTTase N-terminal domain in the interval 22–139 (RRYYVWTVGC…VVALAPNPIY (118 aa)). [4Fe-4S] cluster-binding residues include Cys-31, Cys-67, Cys-101, Cys-166, Cys-170, and Cys-173. One can recognise a Radical SAM core domain in the interval 152–386 (SHPPVSVHVP…EQLQEQIATE (235 aa)). Residues 389 to 449 (ARFLGQTVEV…PWSLQGVPQL (61 aa)) form the TRAM domain.

This sequence belongs to the methylthiotransferase family. MiaB subfamily. In terms of assembly, monomer. [4Fe-4S] cluster is required as a cofactor.

Its subcellular location is the cytoplasm. It carries out the reaction N(6)-dimethylallyladenosine(37) in tRNA + (sulfur carrier)-SH + AH2 + 2 S-adenosyl-L-methionine = 2-methylsulfanyl-N(6)-dimethylallyladenosine(37) in tRNA + (sulfur carrier)-H + 5'-deoxyadenosine + L-methionine + A + S-adenosyl-L-homocysteine + 2 H(+). Functionally, catalyzes the methylthiolation of N6-(dimethylallyl)adenosine (i(6)A), leading to the formation of 2-methylthio-N6-(dimethylallyl)adenosine (ms(2)i(6)A) at position 37 in tRNAs that read codons beginning with uridine. This Chloroflexus aurantiacus (strain ATCC 29366 / DSM 635 / J-10-fl) protein is tRNA-2-methylthio-N(6)-dimethylallyladenosine synthase.